The following is a 700-amino-acid chain: Probable E3 ubiquitin ligase complex SCF subunit sconB (700 aa).

Residues 195–241 (IDFLTALPPEISFKILCYLDTTSLCKAAQVSRRWRALADDDVVWHRM) form the F-box domain. Positions 282–313 (SEQSTEDETGSPAPESASSNAKRKPESDDEDT) are disordered. WD repeat units lie at residues 369-406 (GHTNGIMCLQFEDNILATGSYDATIKIWDTETGEELRT), 409-448 (GHESGIRCLQFDDTKLISGSMDRSLKVWNWRTGECISTYT), 450-486 (HRGGVIGLHFDATILASASVDKTVKIWNFEDKSTCLL), 488-529 (GHTD…RTFH), 583-626 (ETQS…CLRT), 627-666 (FFGHLEGVWALAADTLRIVSGAEDRMVKIWDPRTGKCERT), and 669-700 (GHSGPVTCIGLGDSRFATGSEDCEVRMYGFQS). Residues 556 to 598 (NDNVSVTSGDSPAASPRGIPGLDAGTSETQSSPFGPAFDNGRP) are disordered.

This sequence belongs to the WD repeat MET30/SCONB/SCON-2 family. As to quaternary structure, component of the SCF(sconB) E3 ubiquitin ligase complex.

The protein operates within protein modification; protein ubiquitination. Functionally, component of the SCF(sconB) E3 ubiquitin ligase complex involved in the regulation of sulfur metabolite repression, probably by mediating the inactivation or degradation of the metR transcription factor. This chain is Probable E3 ubiquitin ligase complex SCF subunit sconB (sconB), found in Aspergillus clavatus (strain ATCC 1007 / CBS 513.65 / DSM 816 / NCTC 3887 / NRRL 1 / QM 1276 / 107).